Consider the following 120-residue polypeptide: NAD(P)H-quinone oxidoreductase subunit 3 (120 aa).

3 helical membrane passes run Gly-6 to Thr-26, Met-64 to Val-84, and Leu-89 to Ala-109.

The protein belongs to the complex I subunit 3 family. In terms of assembly, NDH-1 can be composed of about 15 different subunits; different subcomplexes with different compositions have been identified which probably have different functions.

It localises to the cellular thylakoid membrane. The enzyme catalyses a plastoquinone + NADH + (n+1) H(+)(in) = a plastoquinol + NAD(+) + n H(+)(out). It catalyses the reaction a plastoquinone + NADPH + (n+1) H(+)(in) = a plastoquinol + NADP(+) + n H(+)(out). Functionally, NDH-1 shuttles electrons from an unknown electron donor, via FMN and iron-sulfur (Fe-S) centers, to quinones in the respiratory and/or the photosynthetic chain. The immediate electron acceptor for the enzyme in this species is believed to be plastoquinone. Couples the redox reaction to proton translocation, and thus conserves the redox energy in a proton gradient. Cyanobacterial NDH-1 also plays a role in inorganic carbon-concentration. The polypeptide is NAD(P)H-quinone oxidoreductase subunit 3 (Prochlorococcus marinus (strain NATL1A)).